A 435-amino-acid polypeptide reads, in one-letter code: Maltodextrin transport system permease protein MdxF (435 aa).

The next 8 membrane-spanning stretches (helical) occupy residues 35–55 (LLFL…GIQA), 73–93 (FMLI…MFYI), 136–156 (AYIM…FVAL), 199–219 (VIWT…TALF), 234–254 (IFLF…SNMF), 293–313 (LIMI…TGVL), 337–357 (HITF…QYTF), and 403–423 (VAAA…LIAF). In terms of domain architecture, ABC transmembrane type-1 spans 195-422 (LGWTVIWTIC…FIVIGISLIA (228 aa)).

This sequence belongs to the binding-protein-dependent transport system permease family. MalFG subfamily. The complex is composed of two ATP-binding proteins (MsmX), two transmembrane proteins (MdxF and MdxG) and a solute-binding protein (MdxE).

Its subcellular location is the cell membrane. Part of the ABC transporter complex involved in maltodextrin import. Probably responsible for the translocation of the substrate across the membrane. The polypeptide is Maltodextrin transport system permease protein MdxF (mdxF) (Bacillus subtilis (strain 168)).